The chain runs to 173 residues: Crossover junction endodeoxyribonuclease RuvC (173 aa).

Active-site residues include aspartate 11, glutamate 71, and aspartate 143. Residues aspartate 11, glutamate 71, and aspartate 143 each coordinate Mg(2+).

It belongs to the RuvC family. Homodimer which binds Holliday junction (HJ) DNA. The HJ becomes 2-fold symmetrical on binding to RuvC with unstacked arms; it has a different conformation from HJ DNA in complex with RuvA. In the full resolvosome a probable DNA-RuvA(4)-RuvB(12)-RuvC(2) complex forms which resolves the HJ. Mg(2+) serves as cofactor.

Its subcellular location is the cytoplasm. The catalysed reaction is Endonucleolytic cleavage at a junction such as a reciprocal single-stranded crossover between two homologous DNA duplexes (Holliday junction).. Functionally, the RuvA-RuvB-RuvC complex processes Holliday junction (HJ) DNA during genetic recombination and DNA repair. Endonuclease that resolves HJ intermediates. Cleaves cruciform DNA by making single-stranded nicks across the HJ at symmetrical positions within the homologous arms, yielding a 5'-phosphate and a 3'-hydroxyl group; requires a central core of homology in the junction. The consensus cleavage sequence is 5'-(A/T)TT(C/G)-3'. Cleavage occurs on the 3'-side of the TT dinucleotide at the point of strand exchange. HJ branch migration catalyzed by RuvA-RuvB allows RuvC to scan DNA until it finds its consensus sequence, where it cleaves and resolves the cruciform DNA. The chain is Crossover junction endodeoxyribonuclease RuvC from Brucella suis (strain ATCC 23445 / NCTC 10510).